A 375-amino-acid polypeptide reads, in one-letter code: MVDNSKIRVVVGMSGGVDSSVSALLLKQQGYDVVGVFMKNWDDTNDDGVCTATEDYEDVKKVADKIGIPYYSINFEKEYWERVFQYFLKEYKAGRTPNPDIMCNTEVKFKSFLEYALDLDADYLAMGHYAKTMVDENGVTHMMRPKDGNKDQTYFLSQLTQEQIKRVMFPLQDLTKPEVRRIAEEAGLVNAKKKDSTGICFIGERNFKHFLSEFLPAQGGDMVTPDGKVVGHHAGLMYYTIGQRQGLGLGSTKESTAPWFVVGKDLEKNQLIVEQGYDSPRLYADRLQASGMTFFTGNPEEDTEFKATAKFRYRQCDVGVTVKYYAASKTADVYFDEPARAVTPGQALVLYNGEECLGGGNIDAAFKDDKKLQLV.

ATP is bound by residues 12–19 (GMSGGVDS) and Met-38. The segment at 98–100 (NPD) is interaction with target base in tRNA. Cys-103 serves as the catalytic Nucleophile. A disulfide bridge links Cys-103 with Cys-200. Residue Gly-127 coordinates ATP. The interval 150–152 (KDQ) is interaction with tRNA. Residue Cys-200 is the Cysteine persulfide intermediate of the active site. An interaction with tRNA region spans residues 312 to 313 (RY).

Belongs to the MnmA/TRMU family.

It is found in the cytoplasm. The enzyme catalyses S-sulfanyl-L-cysteinyl-[protein] + uridine(34) in tRNA + AH2 + ATP = 2-thiouridine(34) in tRNA + L-cysteinyl-[protein] + A + AMP + diphosphate + H(+). Its function is as follows. Catalyzes the 2-thiolation of uridine at the wobble position (U34) of tRNA, leading to the formation of s(2)U34. This is tRNA-specific 2-thiouridylase MnmA from Lactobacillus delbrueckii subsp. bulgaricus (strain ATCC BAA-365 / Lb-18).